The sequence spans 329 residues: N-acetyl-gamma-glutamyl-phosphate reductase (329 aa).

Residue Cys155 is part of the active site.

This sequence belongs to the NAGSA dehydrogenase family. Type 1 subfamily.

It localises to the cytoplasm. The catalysed reaction is N-acetyl-L-glutamate 5-semialdehyde + phosphate + NADP(+) = N-acetyl-L-glutamyl 5-phosphate + NADPH + H(+). The protein operates within amino-acid biosynthesis; L-arginine biosynthesis; N(2)-acetyl-L-ornithine from L-glutamate: step 3/4. Its function is as follows. Catalyzes the NADPH-dependent reduction of N-acetyl-5-glutamyl phosphate to yield N-acetyl-L-glutamate 5-semialdehyde. The chain is N-acetyl-gamma-glutamyl-phosphate reductase from Shewanella piezotolerans (strain WP3 / JCM 13877).